The following is a 247-amino-acid chain: MYTVKLEIFEGPFDLLFHLIEKNEIDLMDIPISIILDQYMEYIRSLQEMDLDVASEFIVMAATLVEIKSRMLLPKFRLEEEAEKIEEDPREELVKQLIEYKKYKEIAQLLSGICGINRRFFKEEPDLNYIDKRVALNYSVEDIVNVYRKILERNKEKENKIEIKKEEYTVVSKIKELLTYLVKKPALWFSEIVRKSRSKLEVVVSFVALLELIKLNRVAAEQQTAYGDIFIRFLGREGRKHDPGRQD.

The protein belongs to the ScpA family. Component of a cohesin-like complex composed of ScpA, ScpB and the Smc homodimer, in which ScpA and ScpB bind to the head domain of Smc. The presence of the three proteins is required for the association of the complex with DNA.

Its subcellular location is the cytoplasm. Functionally, participates in chromosomal partition during cell division. May act via the formation of a condensin-like complex containing Smc and ScpB that pull DNA away from mid-cell into both cell halves. The sequence is that of Segregation and condensation protein A from Caldanaerobacter subterraneus subsp. tengcongensis (strain DSM 15242 / JCM 11007 / NBRC 100824 / MB4) (Thermoanaerobacter tengcongensis).